The sequence spans 410 residues: Lipoyl synthase, mitochondrial (410 aa).

Residues 1-29 (MASTTVCSAARIRVASSQVLRSIANTRTY) constitute a mitochondrion transit peptide. The segment covering 29–39 (YATTSPESSIP) has biased composition (polar residues). Residues 29–49 (YATTSPESSIPETKPTAKRTP) form a disordered region. Residues C129, C134, C140, C160, C164, C167, and S375 each coordinate [4Fe-4S] cluster. The Radical SAM core domain occupies 143-364 (GGSKAAATAT…KEKAMEMGFL (222 aa)).

This sequence belongs to the radical SAM superfamily. Lipoyl synthase family. The cofactor is [4Fe-4S] cluster.

The protein resides in the mitochondrion. The enzyme catalyses [[Fe-S] cluster scaffold protein carrying a second [4Fe-4S](2+) cluster] + N(6)-octanoyl-L-lysyl-[protein] + 2 oxidized [2Fe-2S]-[ferredoxin] + 2 S-adenosyl-L-methionine + 4 H(+) = [[Fe-S] cluster scaffold protein] + N(6)-[(R)-dihydrolipoyl]-L-lysyl-[protein] + 4 Fe(3+) + 2 hydrogen sulfide + 2 5'-deoxyadenosine + 2 L-methionine + 2 reduced [2Fe-2S]-[ferredoxin]. It functions in the pathway protein modification; protein lipoylation via endogenous pathway; protein N(6)-(lipoyl)lysine from octanoyl-[acyl-carrier-protein]: step 2/2. In terms of biological role, catalyzes the radical-mediated insertion of two sulfur atoms into the C-6 and C-8 positions of the octanoyl moiety bound to the lipoyl domains of lipoate-dependent enzymes, thereby converting the octanoylated domains into lipoylated derivatives. This chain is Lipoyl synthase, mitochondrial, found in Arthroderma otae (strain ATCC MYA-4605 / CBS 113480) (Microsporum canis).